Reading from the N-terminus, the 274-residue chain is Factor H binding protein (274 aa).

Residues 1-19 form the signal peptide; sequence MNRTAFCCLSLTTALILTA. Cys-20 carries the N-palmitoyl cysteine lipid modification. Cys-20 carries S-diacylglycerol cysteine lipidation. A domain A region spans residues 27-119; the sequence is VAADIGAGLA…LESGEFQVYK (93 aa). Residues 120–183 are domain B; the sequence is QSHSALTAFQ…TAFGSDDAGG (64 aa). Positions 184–274 are domain C; it reads KLTYTIDFAA…IRHIGLAAKQ (91 aa).

It belongs to the factor H binding-protein family. Binds to host factor H (fH from human). Both fHbp beta-barrels contact Sushi domains 6 and 7 in fH (also called complement control protein domains, CCP). This interaction probably mimics the normal (carbohydrate-dependent) mode of fH recruitement, regulating fH activity. Sucrose octasulphate inhibits the fHbp-fH interaction. Post-translationally, protein is lipidated in N.meningitidis upon growth in radioactive palmitic acid, probably on Cys-20.

The protein localises to the cell outer membrane. It is found in the secreted. Its subcellular location is the extracellular vesicle. It localises to the bacterial extracellular vesicle. A bacterial surface lipoprotein that binds host (human) complement factor H (fH, gene CFH), binding contributes to the avoidance of complement-mediated lysis by N.meningitidis. Binding of fH to the bacteria surface is independent of bacterial sialic acid moieties. fH binding affinity is high enough that it may sequester plasma fH, depleting its circulating levels and de-regulating complement in the host. This protein induces high levels of bactericidal antibodies in mice. The sequence is that of Factor H binding protein (fhbP) from Neisseria meningitidis serogroup B (strain ATCC BAA-335 / MC58).